Consider the following 943-residue polypeptide: Nuclear receptor coactivator 7 (943 aa).

At Met-1 the chain carries N-acetylmethionine. The span at 1–15 shows a compositional bias: basic and acidic residues; the sequence is MDTKEEKKEQKERKQ. Residues 1–32 adopt a coiled-coil conformation; it reads MDTKEEKKEQKERKQSYFARLKKKKQAKQNAE. Residues 1–83 are disordered; sequence MDTKEEKKEQ…RKSNQLKEIR (83 aa). Residue Ser-92 is modified to Phosphoserine. The LysM domain maps to 117–160; sequence MEYTAGSQDTLNSVALKFNVTPNKLVELNKLFTHTIVPGQVLFV. Thr-137 carries the phosphothreonine modification. Positions 169-189 are disordered; that stretch reads TIQLSSSTPGATVSPSSSDAE. A compositionally biased stretch (polar residues) spans 177–187; it reads PGATVSPSSSD. A phosphoserine mark is found at Ser-182, Ser-186, Ser-211, Ser-212, and Ser-214. Residues 334-369 form a disordered region; the sequence is EKRQQNGERTLALDAKSVRSPEESTERTCTRIEPPD. Basic and acidic residues predominate over residues 349–369; the sequence is KSVRSPEESTERTCTRIEPPD. A phosphoserine mark is found at Ser-442, Ser-498, and Ser-500. The segment covering 486-499 has biased composition (basic and acidic residues); that stretch reads EKQDEAPEVDKHSG. 2 disordered regions span residues 486 to 507 and 543 to 576; these read EKQDEAPEVDKHSGSPENLGES and LSDRKSIEPGGIDITLSSSLPQAGDSPPEDNKEP. Residues 782-943 enclose the TLDc domain; it reads ALLENMHIEQ…VQDLEVWTFE (162 aa).

The protein belongs to the OXR1 family. In terms of assembly, interacts with ESR1, ESR2A, ESR2B, THRB, PPARG and RARA in a ligand-inducible manner. Interacts with the heterodimer AHR-ARNT. As to expression, highly expressed in brain and kidney. Weakly expressed in mammary gland, lung and testis. In brain, expression is found in neurons of cerebral cortex, thalamus, hypothalamus, hippocampus, cerebellum, striatum and choroid plexus.

The protein resides in the nucleus. Its function is as follows. Enhances the transcriptional activities of several nuclear receptors. Involved in the coactivation of different nuclear receptors, such as ESR1, THRB, PPARG and RARA. The protein is Nuclear receptor coactivator 7 (Ncoa7) of Mus musculus (Mouse).